A 412-amino-acid polypeptide reads, in one-letter code: UDP-galactose transporter homolog 1 (412 aa).

Residues 3–23 form a helical membrane-spanning segment; that stretch reads VLRLAVCISGVYAAFLLWAIA. Residues 31 to 51 are disordered; the sequence is FPSVHPHPHQQPHSPSDPPPG. Transmembrane regions (helical) follow at residues 58–78, 139–159, 197–217, and 222–242; these read LFLNFAQALASSLSALCYLSF, LLALLVQVSVFQTIASPIGFL, YIVVALVTVGISMFMLFAETS, and GGSDSMWGLVLLLVNLLIDGL. An N-linked (GlcNAc...) asparagine glycan is attached at Asn-244. 4 consecutive transmembrane segments (helical) span residues 262-282, 325-345, 355-375, and 379-399; these read MMFTMALTTQIILLPLLVLPL, SALAPLFAYALLGGLGQLFIF, TLVMVTVTRKLFTMLLSVVVF, and LTKGQWLGVGVVFAGIGVEAG.

The protein belongs to the nucleotide-sugar transporter family. SLC35B subfamily.

The protein resides in the endoplasmic reticulum membrane. Functionally, may be involved in specific transport of UDP-Gal from the cytosol to the Golgi lumen. Involved in the maintenance of optimal conditions for the folding of secretory pathway proteins in the endoplasmic reticulum. In Cryptococcus neoformans var. neoformans serotype D (strain JEC21 / ATCC MYA-565) (Filobasidiella neoformans), this protein is UDP-galactose transporter homolog 1 (HUT1-A).